The following is a 165-amino-acid chain: Nucleotide-binding protein P9515_05441 (165 aa).

Belongs to the YajQ family.

In terms of biological role, nucleotide-binding protein. The protein is Nucleotide-binding protein P9515_05441 of Prochlorococcus marinus (strain MIT 9515).